The following is a 511-amino-acid chain: Maturase K (511 aa).

The protein belongs to the intron maturase 2 family. MatK subfamily.

The protein resides in the plastid. Its subcellular location is the chloroplast. Usually encoded in the trnK tRNA gene intron. Probably assists in splicing its own and other chloroplast group II introns. This Hordeum bulbosum (Bulbous barley) protein is Maturase K.